Consider the following 343-residue polypeptide: tRNA N6-adenosine threonylcarbamoyltransferase (343 aa).

H116 and H120 together coordinate Fe cation. Substrate-binding positions include 138–142 (LVSGG), D171, G184, D188, and N277. D306 is a Fe cation binding site.

The protein belongs to the KAE1 / TsaD family. It depends on Fe(2+) as a cofactor.

Its subcellular location is the cytoplasm. The enzyme catalyses L-threonylcarbamoyladenylate + adenosine(37) in tRNA = N(6)-L-threonylcarbamoyladenosine(37) in tRNA + AMP + H(+). Its function is as follows. Required for the formation of a threonylcarbamoyl group on adenosine at position 37 (t(6)A37) in tRNAs that read codons beginning with adenine. Is involved in the transfer of the threonylcarbamoyl moiety of threonylcarbamoyl-AMP (TC-AMP) to the N6 group of A37, together with TsaE and TsaB. TsaD likely plays a direct catalytic role in this reaction. This Ligilactobacillus salivarius (strain UCC118) (Lactobacillus salivarius) protein is tRNA N6-adenosine threonylcarbamoyltransferase.